The sequence spans 807 residues: Tyrosine-protein phosphatase non-receptor type 22 (807 aa).

The 266-residue stretch at 24-289 (FANEFLKLKR…ELVYNAVLEL (266 aa)) folds into the Tyrosine-protein phosphatase domain. At serine 35 the chain carries Phosphoserine; by PKC/PRKCD. Cysteines 129 and 227 form a disulfide. Residue cysteine 227 is the Phosphocysteine intermediate of the active site. Residues 227–233 (CSAGCGR) and glutamine 274 each bind substrate. Phosphoserine is present on residues serine 449, serine 635, serine 684, and serine 692. Disordered stretches follow at residues 676–700 (SVKL…LPER) and 724–746 (SYPD…GKSF).

This sequence belongs to the protein-tyrosine phosphatase family. Non-receptor class 4 subfamily. Interacts with CSK. Interacts with LPXN. Interacts with CBL. Interacts with TRAF3 (via MATH domain); the interaction promotes TRAF3 polyubiquitination. In terms of processing, phosphorylation on Ser-35 by PKC/PRKCD abrogates its ability to dephosphorylate and inactivate the SRC family kinases. Expressed in bone marrow, B and T-cells, PBMCs, natural killer cells, monocytes, dendritic cells and neutrophils. Both isoform 1 and 4 are predominantly expressed in lymphoid tissues and cells. Isoform 1 is expressed in thymocytes and both mature B and T-cells.

It is found in the cytoplasm. The catalysed reaction is O-phospho-L-tyrosyl-[protein] + H2O = L-tyrosyl-[protein] + phosphate. It carries out the reaction N-(5Z,8Z,11Z,14Z-eicosatetraenoyl)-ethanolamine phosphate + H2O = N-(5Z,8Z,11Z,14Z-eicosatetraenoyl)-ethanolamine + phosphate. Its activity is regulated as follows. Down-regulated by phosphorylation. In terms of biological role, acts as a negative regulator of T-cell receptor (TCR) signaling by direct dephosphorylation of the Src family kinases LCK and FYN, ITAMs of the TCRz/CD3 complex, as well as ZAP70, VAV, VCP and other key signaling molecules. Associates with and probably dephosphorylates CBL. Dephosphorylates LCK at its activating 'Tyr-394' residue. Dephosphorylates ZAP70 at its activating 'Tyr-493' residue. Dephosphorylates the immune system activator SKAP2. Positively regulates toll-like receptor (TLR)-induced type 1 interferon production. Promotes host antiviral responses mediated by type 1 interferon. Regulates NOD2-induced pro-inflammatory cytokine secretion and autophagy. Acts as an activator of NLRP3 inflammasome assembly by mediating dephosphorylation of 'Tyr-861' of NLRP3. Dephosphorylates phospho-anandamide (p-AEA), an endocannabinoid to anandamide (also called N-arachidonoylethanolamide). This chain is Tyrosine-protein phosphatase non-receptor type 22 (PTPN22), found in Homo sapiens (Human).